Reading from the N-terminus, the 285-residue chain is NAD kinase (285 aa).

The Proton acceptor role is filled by Asp-68. NAD(+) is bound by residues 68–69 (DG), 142–143 (ND), Arg-153, Lys-170, Asp-172, and Gln-242.

Belongs to the NAD kinase family. A divalent metal cation serves as cofactor.

Its subcellular location is the cytoplasm. It catalyses the reaction NAD(+) + ATP = ADP + NADP(+) + H(+). Functionally, involved in the regulation of the intracellular balance of NAD and NADP, and is a key enzyme in the biosynthesis of NADP. Catalyzes specifically the phosphorylation on 2'-hydroxyl of the adenosine moiety of NAD to yield NADP. The chain is NAD kinase from Koribacter versatilis (strain Ellin345).